We begin with the raw amino-acid sequence, 209 residues long: Uracil phosphoribosyltransferase (209 aa).

5-phospho-alpha-D-ribose 1-diphosphate-binding positions include Arg-79, Arg-104, and 131-139; that span reads DPMLATGNS. Residues Ile-194 and 199-201 contribute to the uracil site; that span reads GDA. 5-phospho-alpha-D-ribose 1-diphosphate is bound at residue Asp-200.

It belongs to the UPRTase family. Mg(2+) is required as a cofactor.

It carries out the reaction UMP + diphosphate = 5-phospho-alpha-D-ribose 1-diphosphate + uracil. It participates in pyrimidine metabolism; UMP biosynthesis via salvage pathway; UMP from uracil: step 1/1. Its activity is regulated as follows. Allosterically activated by GTP. Its function is as follows. Catalyzes the conversion of uracil and 5-phospho-alpha-D-ribose 1-diphosphate (PRPP) to UMP and diphosphate. The chain is Uracil phosphoribosyltransferase from Variovorax paradoxus (strain S110).